The primary structure comprises 131 residues: Sperm microtubule inner protein 11 (131 aa).

The disordered stretch occupies residues 17–44; it reads SKKRDKTEETNQKDPVPTRLPPIFSEDG.

As to quaternary structure, microtubule inner protein component of sperm flagellar doublet microtubules. As to expression, expressed in sperm.

It is found in the cytoplasm. It localises to the cytoskeleton. The protein resides in the flagellum axoneme. Microtubule inner protein (MIP) part of the dynein-decorated doublet microtubules (DMTs) in flagellum axoneme. May serve to reinforce and thus stabilize the microtubule structure in the sperm flagella. In Bos taurus (Bovine), this protein is Sperm microtubule inner protein 11 (SPMIP11).